Consider the following 213-residue polypeptide: Probable thymidylate kinase 2 (213 aa).

An ATP-binding site is contributed by 10 to 17 (GIDGSGKS).

It belongs to the thymidylate kinase family.

It carries out the reaction dTMP + ATP = dTDP + ADP. The protein is Probable thymidylate kinase 2 (tmk2) of Saccharolobus solfataricus (strain ATCC 35092 / DSM 1617 / JCM 11322 / P2) (Sulfolobus solfataricus).